A 214-amino-acid chain; its full sequence is Galactokinase (214 aa).

Arginine 47, aspartate 53, histidine 54, and aspartate 56 together coordinate alpha-D-galactose. 4 residues coordinate ATP: glycine 149, glycine 151, serine 153, and serine 154. Aspartate 199 contributes to the alpha-D-galactose binding site. The Proton acceptor role is filled by aspartate 199.

This sequence belongs to the GHMP kinase family. GalK subfamily.

The catalysed reaction is alpha-D-galactose + ATP = alpha-D-galactose 1-phosphate + ADP + H(+). It functions in the pathway carbohydrate metabolism; galactose metabolism. Its function is as follows. Galactokinase is a key enzyme in the galactose metabolism where it catalyzes the conversion of alpha-D-galactose to galactose 1-phosphate. Can also induce the transcription of the gal genes in response to the organism being challenged with galactose as the sole source of carbon. The protein is Galactokinase of Candida maltosa (Yeast).